A 292-amino-acid polypeptide reads, in one-letter code: GTP cyclohydrolase FolE2 (292 aa).

It belongs to the GTP cyclohydrolase IV family.

It catalyses the reaction GTP + H2O = 7,8-dihydroneopterin 3'-triphosphate + formate + H(+). The protein operates within cofactor biosynthesis; 7,8-dihydroneopterin triphosphate biosynthesis; 7,8-dihydroneopterin triphosphate from GTP: step 1/1. In terms of biological role, converts GTP to 7,8-dihydroneopterin triphosphate. This is GTP cyclohydrolase FolE2 from Staphylococcus saprophyticus subsp. saprophyticus (strain ATCC 15305 / DSM 20229 / NCIMB 8711 / NCTC 7292 / S-41).